We begin with the raw amino-acid sequence, 164 residues long: Coenzyme Q-binding protein coq10, mitochondrial (164 aa).

Belongs to the COQ10 family. As to quaternary structure, interacts with coenzyme Q.

It is found in the mitochondrion inner membrane. Functionally, required for the function of coenzyme Q in the respiratory chain. May serve as a chaperone or may be involved in the transport of Q6 from its site of synthesis to the catalytic sites of the respiratory complexes. This Schizosaccharomyces pombe (strain 972 / ATCC 24843) (Fission yeast) protein is Coenzyme Q-binding protein coq10, mitochondrial.